Consider the following 149-residue polypeptide: Transcriptional regulator MraZ (149 aa).

SpoVT-AbrB domains lie at 9–52 (AYSY…PRAQ) and 82–125 (AQEV…DRAR).

The protein belongs to the MraZ family. Forms oligomers.

Its subcellular location is the cytoplasm. The protein localises to the nucleoid. The polypeptide is Transcriptional regulator MraZ (Treponema pallidum subsp. pallidum (strain SS14)).